Reading from the N-terminus, the 875-residue chain is MLIQFLTKIFSNHNNRILKKFKKIVLSVNKLEKNFEKLSDKELQAQTELFRLRLRNGETLDDILPEAFALVREASKRVFSMRHFDVQILGGIALNKQCIAEMRTGEGKTLTSTLPAYLNALNGKGVHIVTMNDYLARRDAEKNTPLFEFLGLTVGLNLSEMSFFSKRKAYLSDITYGTNNEYGFDYLRDNMVFSPEERVQRKLNYALVDEVDSILIDEARTPLIISGPSEDSSELYKEINKIVPFLNSQKKEDSDIFCGTGDFSIDEKSKQIYLTERGLIKVEKILFDKKLMNTGESLYSSNNIILMHHVLSALRAHKLFVRNVDYLVKDNSVIIVDEHTGRTMPGRRWSDGLHQAIEAKENVSIKNENQTLASITFQNYFRLYEKIAGMTGTAETESFEFNSIYNLDTIVIPTNRKMIRKDFPDLVYMTEKEKINAIIQDIQKCIKLNQPVLVGTVSIEKSEIISKELLKLNINHNVLNAKFHAKEAEIIAQAGKPGSITIATNMAGRGTDIVLGGNLEVELNKYKNITSRKIEEIKKKWQSEHDLVVSAGGLHIIGTERHESRRIDNQLRGRSGRQGDTGSSRFYLSMEDSLMRIFASDKIVHMMKKLGLAFNEAIEHSWVTKAIENAQKKVENRNFDIRKQLLEYDDVINEQRSAIYSQRNKLIDARDIKLMIYDIFKDVLKKNIILYIPKNTFHDKWNITDLKDKLNIDFYLNAPILDWINIEPNLTDKKIIKRIIDFARINYKNKEILIGSNNMRIIEKIIMLQTLDSLWKEHLAAVDYLRQGIHLRGYAQKDPKQEYKRESFNMFSSMLELLKFEVVSFLSRINSSYAKKYIDLNKHLVITHNNTMKISRNSPCLCGSGKKYKYCHGSL.

Residues Gln-87, 105–109 (GEGKT), and Asp-512 contribute to the ATP site. Zn(2+) contacts are provided by Cys-860, Cys-862, Cys-871, and His-872.

It belongs to the SecA family. Monomer and homodimer. Part of the essential Sec protein translocation apparatus which comprises SecA, SecYEG and auxiliary proteins SecDF-YajC and YidC. It depends on Zn(2+) as a cofactor.

The protein resides in the cell inner membrane. Its subcellular location is the cytoplasm. It catalyses the reaction ATP + H2O + cellular proteinSide 1 = ADP + phosphate + cellular proteinSide 2.. Part of the Sec protein translocase complex. Interacts with the SecYEG preprotein conducting channel. Has a central role in coupling the hydrolysis of ATP to the transfer of proteins into and across the cell membrane, serving both as a receptor for the preprotein-SecB complex and as an ATP-driven molecular motor driving the stepwise translocation of polypeptide chains across the membrane. The chain is Protein translocase subunit SecA from Buchnera aphidicola subsp. Acyrthosiphon pisum (strain APS) (Acyrthosiphon pisum symbiotic bacterium).